The sequence spans 89 residues: Small ribosomal subunit protein uS15 (89 aa).

Belongs to the universal ribosomal protein uS15 family. As to quaternary structure, part of the 30S ribosomal subunit. Forms a bridge to the 50S subunit in the 70S ribosome, contacting the 23S rRNA.

In terms of biological role, one of the primary rRNA binding proteins, it binds directly to 16S rRNA where it helps nucleate assembly of the platform of the 30S subunit by binding and bridging several RNA helices of the 16S rRNA. Its function is as follows. Forms an intersubunit bridge (bridge B4) with the 23S rRNA of the 50S subunit in the ribosome. This is Small ribosomal subunit protein uS15 from Vibrio parahaemolyticus serotype O3:K6 (strain RIMD 2210633).